Reading from the N-terminus, the 484-residue chain is Chromosomal replication initiator protein DnaA (484 aa).

The tract at residues 1 to 73 (MQEGKNIWSL…EILIEKGHST (73 aa)) is domain I, interacts with DnaA modulators. Residues 73–140 (TINVEFIHSQ…EEIHIKYRNP (68 aa)) are domain II. A domain III, AAA+ region region spans residues 141-357 (FLKKKYTFEN…AAVTKLKAHI (217 aa)). Residues glycine 185, glycine 187, lysine 188, and threonine 189 each coordinate ATP. Residues 358 to 484 (DLEDIEIDTN…IELMNKINKN (127 aa)) form a domain IV, binds dsDNA region.

This sequence belongs to the DnaA family. In terms of assembly, oligomerizes as a right-handed, spiral filament on DNA at oriC.

It is found in the cytoplasm. In terms of biological role, plays an essential role in the initiation and regulation of chromosomal replication. ATP-DnaA binds to the origin of replication (oriC) to initiate formation of the DNA replication initiation complex once per cell cycle. Binds the DnaA box (a 9 base pair repeat at the origin) and separates the double-stranded (ds)DNA. Forms a right-handed helical filament on oriC DNA; dsDNA binds to the exterior of the filament while single-stranded (ss)DNA is stabiized in the filament's interior. The ATP-DnaA-oriC complex binds and stabilizes one strand of the AT-rich DNA unwinding element (DUE), permitting loading of DNA polymerase. After initiation quickly degrades to an ADP-DnaA complex that is not apt for DNA replication. Binds acidic phospholipids. This is Chromosomal replication initiator protein DnaA from Borrelia duttonii (strain Ly).